Here is a 150-residue protein sequence, read N- to C-terminus: Large ribosomal subunit protein uL13 (150 aa).

This sequence belongs to the universal ribosomal protein uL13 family. Part of the 50S ribosomal subunit.

This protein is one of the early assembly proteins of the 50S ribosomal subunit, although it is not seen to bind rRNA by itself. It is important during the early stages of 50S assembly. The chain is Large ribosomal subunit protein uL13 from Chlamydia trachomatis serovar A (strain ATCC VR-571B / DSM 19440 / HAR-13).